The sequence spans 278 residues: Large ribosomal subunit protein uL2 (278 aa).

The interval 222 to 278 is disordered; it reads GVVMNPIDHPHGGGEGRTSGGRHPVTPWGKPTKGKKTRSNKSTDKFILISRHKRKKK.

This sequence belongs to the universal ribosomal protein uL2 family. Part of the 50S ribosomal subunit. Forms a bridge to the 30S subunit in the 70S ribosome.

One of the primary rRNA binding proteins. Required for association of the 30S and 50S subunits to form the 70S ribosome, for tRNA binding and peptide bond formation. It has been suggested to have peptidyltransferase activity; this is somewhat controversial. Makes several contacts with the 16S rRNA in the 70S ribosome. The protein is Large ribosomal subunit protein uL2 of Rhodopseudomonas palustris (strain ATCC BAA-98 / CGA009).